The sequence spans 236 residues: Flagellar L-ring protein (236 aa).

Positions Met-1–Gly-16 are cleaved as a signal peptide. The N-palmitoyl cysteine moiety is linked to residue Cys-17. The S-diacylglycerol cysteine moiety is linked to residue Cys-17. The segment at Glu-96 to Glu-143 is disordered. The span at Asn-105 to Phe-122 shows a compositional bias: polar residues.

The protein belongs to the FlgH family. The basal body constitutes a major portion of the flagellar organelle and consists of four rings (L,P,S, and M) mounted on a central rod.

Its subcellular location is the cell outer membrane. The protein localises to the bacterial flagellum basal body. Assembles around the rod to form the L-ring and probably protects the motor/basal body from shearing forces during rotation. In Sinorhizobium medicae (strain WSM419) (Ensifer medicae), this protein is Flagellar L-ring protein.